Here is a 316-residue protein sequence, read N- to C-terminus: Transcription initiation factor IIB (316 aa).

A TFIIB-type zinc finger spans residues 11 to 42 (PRVTCPNHPDAILVEDYRAGDMICPECGLVVG). Residues Cys15, His18, Cys34, and Cys37 each coordinate Zn(2+). Ser70, Ser76, and Ser92 each carry phosphoserine. A run of 2 repeats spans residues 124 to 200 (MADR…LILK) and 218 to 294 (FCSN…LIYP). 4 residues coordinate DNA: Lys152, Arg154, Lys189, and Lys196. The segment at 189 to 193 (KEIGR) is core promoter DNA-binding. Position 238 is an N6-acetyllysine; by autocatalysis (Lys238). A necessary for TATA box-bound complex TBP formation region spans residues 244–316 (LVPGRSPISV…DTPVDKLPQL (73 aa)). Residue Arg248 coordinates DNA. The tract at residues 249 to 252 (SPIS) is core promoter DNA-binding. The DNA site is built by Lys272, Ala281, Thr284, Arg286, and Arg290. Residues 283 to 286 (VTIR) are core promoter DNA-binding.

The protein belongs to the TFIIB family. Found in a ternary complex with TATA box-bound TBP. Part of a TFIID-containing RNA polymerase II pre-initiation complex (PIC) that is composed of TBP and at least GTF2A1, GTF2A2, GTF2E1, GTF2E2, GTF2F1, GTF2H2, GTF2H3, GTF2H4, GTF2H5, GTF2B, TCEA1, ERCC2, ERCC3, TAF1, TAF2, TAF3, TAF4, TAF5, TAF6, TAF7, TAF8, TAF9, TAF10, TAF11, TAF12 and TAF13. Associates with TFIID-TFIIA (DA complex) to form TFIID-TFIIA-TFIIB (DAB complex), which is then recognized by RNA polymerase II (Pol II). Found in a RNA polymerase II initiation complex. Interacts (via C-terminus) with TBP; this interaction with TATA box-bound TBP guides Pol II into the PIC. Interacts (via N-terminus) with Pol II. Interacts (via C-terminus) with SSU72; this interaction is inhibited by SYMPK. Interacts with NR2F1; this interaction is direct. Interacts with PGR. Interacts with ESR1. Interacts with GTF2F1 (via C-terminus and preferentially via acetylated form); this interaction prevents binding of GTF2B to GTF2F2. Interacts with GTF2F2 (via N-terminus); this interaction is inhibited in presence of GTF2F1. Interacts with the transcription elongation factor TCEA2. Interacts with HSF1 (via transactivation domain). Interacts with GPBP1. Post-translationally, acetylated. Autoacetylated; autoacetylation at Lys-238 stimulates transcription activation.

The protein localises to the nucleus. It localises to the chromosome. The enzyme catalyses L-lysyl-[protein] + acetyl-CoA = N(6)-acetyl-L-lysyl-[protein] + CoA + H(+). General transcription factor that plays a role in transcription initiation by RNA polymerase II (Pol II). Involved in the pre-initiation complex (PIC) formation and Pol II recruitment at promoter DNA. Together with the TATA box-bound TBP forms the core initiation complex and provides a bridge between TBP and the Pol II-TFIIF complex. Released from the PIC early following the onset of transcription during the initiation and elongation transition and reassociates with TBP during the next transcription cycle. Associates with chromatin to core promoter-specific regions. Binds to two distinct DNA core promoter consensus sequence elements in a TBP-independent manner; these IIB-recognition elements (BREs) are localized immediately upstream (BREu), 5'-[GC][GC][GA]CGCC-3', and downstream (BREd), 5'-[GA]T[TGA][TG][GT][TG][TG]-3', of the TATA box element. Modulates transcription start site selection. Also exhibits autoacetyltransferase activity that contributes to the activated transcription. The polypeptide is Transcription initiation factor IIB (Pongo abelii (Sumatran orangutan)).